The following is a 76-amino-acid chain: Exodeoxyribonuclease 7 small subunit (76 aa).

The protein belongs to the XseB family. In terms of assembly, heterooligomer composed of large and small subunits.

It localises to the cytoplasm. It catalyses the reaction Exonucleolytic cleavage in either 5'- to 3'- or 3'- to 5'-direction to yield nucleoside 5'-phosphates.. In terms of biological role, bidirectionally degrades single-stranded DNA into large acid-insoluble oligonucleotides, which are then degraded further into small acid-soluble oligonucleotides. This is Exodeoxyribonuclease 7 small subunit from Bacillus cereus (strain ATCC 14579 / DSM 31 / CCUG 7414 / JCM 2152 / NBRC 15305 / NCIMB 9373 / NCTC 2599 / NRRL B-3711).